A 470-amino-acid polypeptide reads, in one-letter code: Neuraminidase (470 aa).

The Intravirion portion of the chain corresponds to 1–6; it reads MNPNQK. Residues 7–27 form a helical membrane-spanning segment; it reads IITIGSISIAIGIISLMLQIG. Positions 11-33 are involved in apical transport and lipid raft association; sequence GSISIAIGIISLMLQIGNIISMW. The Virion surface segment spans residues 28–470; that stretch reads NIISMWASHS…GAELPFTIDK (443 aa). The interval 36 to 90 is hypervariable stalk region; sequence HSIQTGSQNHTGICNQRIITYENSTWVNHTYVNINNTNVVTGKDKTSVTLAGNSS. N-linked (GlcNAc...) asparagine; by host glycans are attached at residues asparagine 44, asparagine 58, asparagine 63, asparagine 70, and asparagine 88. A head of neuraminidase region spans residues 91–470; the sequence is LCSISGWAIY…GAELPFTIDK (380 aa). 8 disulfide bridges follow: cysteine 92/cysteine 417, cysteine 124/cysteine 129, cysteine 184/cysteine 231, cysteine 233/cysteine 238, cysteine 279/cysteine 292, cysteine 281/cysteine 290, cysteine 318/cysteine 335, and cysteine 421/cysteine 447. Substrate is bound at residue arginine 118. A glycan (N-linked (GlcNAc...) asparagine; by host) is linked at asparagine 146. Aspartate 151 serves as the catalytic Proton donor/acceptor. Arginine 152 provides a ligand contact to substrate. Asparagine 235 is a glycosylation site (N-linked (GlcNAc...) asparagine; by host). Position 277–278 (277–278) interacts with substrate; it reads EE. Residue arginine 293 participates in substrate binding. Residues aspartate 294, glycine 298, and aspartate 324 each coordinate Ca(2+). Arginine 368 serves as a coordination point for substrate. The active-site Nucleophile is tyrosine 402. N-linked (GlcNAc...) asparagine; by host glycosylation is found at asparagine 434 and asparagine 455.

It belongs to the glycosyl hydrolase 34 family. As to quaternary structure, homotetramer. Requires Ca(2+) as cofactor. N-glycosylated.

The protein localises to the virion membrane. Its subcellular location is the host apical cell membrane. It catalyses the reaction Hydrolysis of alpha-(2-&gt;3)-, alpha-(2-&gt;6)-, alpha-(2-&gt;8)- glycosidic linkages of terminal sialic acid residues in oligosaccharides, glycoproteins, glycolipids, colominic acid and synthetic substrates.. Inhibited by the neuraminidase inhibitors zanamivir (Relenza) and oseltamivir (Tamiflu). These drugs interfere with the release of progeny virus from infected cells and are effective against all influenza strains. Resistance to neuraminidase inhibitors is quite rare. Its function is as follows. Catalyzes the removal of terminal sialic acid residues from viral and cellular glycoconjugates. Cleaves off the terminal sialic acids on the glycosylated HA during virus budding to facilitate virus release. Additionally helps virus spread through the circulation by further removing sialic acids from the cell surface. These cleavages prevent self-aggregation and ensure the efficient spread of the progeny virus from cell to cell. Otherwise, infection would be limited to one round of replication. Described as a receptor-destroying enzyme because it cleaves a terminal sialic acid from the cellular receptors. May facilitate viral invasion of the upper airways by cleaving the sialic acid moieties on the mucin of the airway epithelial cells. Likely to plays a role in the budding process through its association with lipid rafts during intracellular transport. May additionally display a raft-association independent effect on budding. Plays a role in the determination of host range restriction on replication and virulence. Sialidase activity in late endosome/lysosome traffic seems to enhance virus replication. The chain is Neuraminidase from Aves (Human).